The primary structure comprises 427 residues: Trigger factor (427 aa).

The region spanning 163-248 (GDTVVIDFVG…IHEVKTKEVP (86 aa)) is the PPIase FKBP-type domain.

The protein belongs to the FKBP-type PPIase family. Tig subfamily.

It localises to the cytoplasm. The catalysed reaction is [protein]-peptidylproline (omega=180) = [protein]-peptidylproline (omega=0). In terms of biological role, involved in protein export. Acts as a chaperone by maintaining the newly synthesized protein in an open conformation. Functions as a peptidyl-prolyl cis-trans isomerase. This Streptococcus agalactiae serotype III (strain NEM316) protein is Trigger factor.